Reading from the N-terminus, the 209-residue chain is Large ribosomal subunit protein uL3 (209 aa).

At glutamine 150 the chain carries N5-methylglutamine.

The protein belongs to the universal ribosomal protein uL3 family. Part of the 50S ribosomal subunit. Forms a cluster with proteins L14 and L19. Methylated by PrmB.

One of the primary rRNA binding proteins, it binds directly near the 3'-end of the 23S rRNA, where it nucleates assembly of the 50S subunit. In Photobacterium profundum (strain SS9), this protein is Large ribosomal subunit protein uL3.